The sequence spans 218 residues: Deoxyribose-phosphate aldolase (218 aa).

The Proton donor/acceptor role is filled by Asp92. Lys156 acts as the Schiff-base intermediate with acetaldehyde in catalysis. The Proton donor/acceptor role is filled by Lys185.

Belongs to the DeoC/FbaB aldolase family. DeoC type 1 subfamily.

Its subcellular location is the cytoplasm. The enzyme catalyses 2-deoxy-D-ribose 5-phosphate = D-glyceraldehyde 3-phosphate + acetaldehyde. It functions in the pathway carbohydrate degradation; 2-deoxy-D-ribose 1-phosphate degradation; D-glyceraldehyde 3-phosphate and acetaldehyde from 2-deoxy-alpha-D-ribose 1-phosphate: step 2/2. Catalyzes a reversible aldol reaction between acetaldehyde and D-glyceraldehyde 3-phosphate to generate 2-deoxy-D-ribose 5-phosphate. This Desulfitobacterium hafniense (strain Y51) protein is Deoxyribose-phosphate aldolase.